Consider the following 486-residue polypeptide: Heme A synthase COX15 (486 aa).

Residues 1-33 constitute a mitochondrion transit peptide; the sequence is MLFRNIEVGRQAAKLLTRTSSRLAWQSIGASRN. Residues 34 to 85 are Mitochondrial matrix-facing; it reads ISTIRQQIRKTQLYNFKKTVSIRPFSLSSPVFKPHVASESNPIESRLKTSKN. Residues 86–106 traverse the membrane as a helical segment; that stretch reads VAYWLIGTSGLVFGIVVLGGL. Residues 107 to 170 are Mitochondrial intermembrane-facing; it reads TRLTESGLSI…FIFFMEWIHR (64 aa). His169 lines the heme o pocket. The chain crosses the membrane as a helical span at residues 171-191; that stretch reads LWGRAIGAVFILPAVYFAVSK. The Mitochondrial matrix segment spans residues 192–200; the sequence is KTSGHVNKR. Residues 201-221 form a helical membrane-spanning segment; it reads LFGLAGLLGLQGFVGWWMVKS. At 222–243 the chain is on the mitochondrial intermembrane side; the sequence is GLDQEQLDARKSKPTVSQYRLT. A helical transmembrane segment spans residues 244–264; that stretch reads THLGTAFFLYMGMLWTGLEIL. His245 contributes to the heme o binding site. Residues 265–293 lie on the Mitochondrial matrix side of the membrane; that stretch reads RECKWIKNPVQAISLFKKLDNPAIGPMRK. The chain crosses the membrane as a helical span at residues 294–314; that stretch reads ISLALLAVSFLTAMSGGMVAG. The Mitochondrial intermembrane segment spans residues 315 to 364; sequence LDAGWVYNTWPKMGERWFPSSRELMDENFCRREDKKDLWWRNLLENPVTV. A helical transmembrane segment spans residues 365–387; the sequence is QLVHRTCAYVAFTSVLAAHMYAI. His368 contributes to the heme b binding site. The Mitochondrial matrix segment spans residues 388-402; it reads KKKAVIPRNAMTSLH. Residues 403–423 form a helical membrane-spanning segment; the sequence is VMMGVVTLQATLGILTILYLV. Residue Pro424 is a topological domain, mitochondrial intermembrane. The chain crosses the membrane as a helical span at residues 425–445; sequence ISLASIHQAGALALLTSSLVF. Heme b is bound at residue His431. At 446-486 the chain is on the mitochondrial matrix side; sequence ASQLRKPRAPMRNVIITLPHSSKVTSGKILSEASKLASKPL.

It belongs to the COX15/CtaA family. Type 2 subfamily. As to quaternary structure, forms 200-350 kDa oligomeric complexes independent on heme binding. In addition to form homooligomeric complexes, a portion also associates with the mitochondrial respiratory supercomplexes. Interacts with CcO assembly factors PET117, SHY1, COA3 and COA1, CcO subunit COX13 and cytochrome b-c1 subunit COR1. It depends on heme b as a cofactor.

It is found in the mitochondrion inner membrane. The catalysed reaction is Fe(II)-heme o + 2 A + H2O = Fe(II)-heme a + 2 AH2. Its pathway is porphyrin-containing compound metabolism; heme A biosynthesis; heme A from heme O: step 1/1. Functionally, catalyzes the second reaction in the biosynthesis of heme A, a prosthetic group of mitochondrial cytochrome c oxidase (CcO). Heme A is synthesized from heme B by two sequential enzymatic reactions catalyzed by heme O synthase (HOS/COX10) and heme A synthase (HAS/COX15). HAS catalyzes the conversion of heme O to heme A by two successive hydroxylations of the methyl group at C8, in a reaction that involves matrix ferredoxin YAH1 and ferredoxin reductase ARH1. The first hydroxylation forms heme I, the second hydroxylation results in an unstable dihydroxymethyl group, which spontaneously dehydrates, resulting in the formyl group of heme A. May also play a secondary role in CcO assembly. Plays a role in the maturation of COX1, the heme A-containing structural CcO subunit, possibly by interacting with the COX1-containing sub-assembly complexes that form prior to heme A insertion. May also positively regulate the upstream enzymatic reaction, farnesylation of heme B by HOS/COX10. The chain is Heme A synthase COX15 from Saccharomyces cerevisiae (strain ATCC 204508 / S288c) (Baker's yeast).